The following is a 477-amino-acid chain: Oleate hydroxylase FAH12 (477 aa).

Residues 26-48 are disordered; it reads YESSAAVSPAESPRTSASSTSLS. Residues 27-48 are compositionally biased toward low complexity; that stretch reads ESSAAVSPAESPRTSASSTSLS. 2 helical membrane-spanning segments follow: residues 101-118 and 133-153; these read AYVL…YLFH and FVLW…LWVI. A Histidine box-1 motif is present at residues 155-159; sequence HECGH. Residues 167-187 form a helical membrane-spanning segment; it reads FISDLTGWVIHSALLVPYFSW. The Histidine box-2 signature appears at 191 to 195; the sequence is HSAHH. 3 helical membrane-spanning segments follow: residues 234-254, 299-319, and 327-347; these read PIYT…SYLM, YIVL…YLGN, and AVWY…ITFL.

It belongs to the fatty acid desaturase type 1 family.

It localises to the microsome membrane. It carries out the reaction (9Z)-octadecenoate + AH2 + O2 = (12R)-hydroxy-(9Z)-octadecenoate + A + H2O. It participates in lipid metabolism; monounsaturated fatty acid biosynthesis. Its function is as follows. Oleate hydroxylase involved in the biosynthesis of ricinoleate (12-hydroxy-cis-9-octadecenoate), that is present at high levels in C.purpurea sclerotium tissue. Exhibits delta(12) hydroxylase activity on 16C and 18C monounsaturated fatty acids (i.e. oleic and palmitoleic acids), and, to a lower extent, gamma(3) hydroxylase activity on ricinoleate. This is Oleate hydroxylase FAH12 from Claviceps purpurea (Ergot fungus).